We begin with the raw amino-acid sequence, 150 residues long: Monooxygenase nsrS (150 aa).

This sequence belongs to the avfA family.

Its pathway is secondary metabolite biosynthesis. In terms of biological role, monooxygenase; part of the gene cluster that mediates the biosynthesis of the tetrahydroxanthone dimer neosartorin, which exhibits antibacterial activity. The two different monomeric units appear to be synthesized by the same set of enzymes, among which the Baeyer-Villiger monooxygenase nsrF is the key enzyme for the divergence of the biosynthetic routes. The pathway begins with the synthesis of atrochrysone thioester by the polyketide synthase nsrB. The atrochrysone carboxyl ACP thioesterase nsrC then breaks the thioester bond and releases the atrochrysone carboxylic acid from AacuL. Atrochrysone carboxylic acid is decarboxylated by the decarboxylase nsrE, and oxidized by the anthrone oxygenase nsrD to yield emodin. Emodin is then reduced to emodin hydroquinone by the oxidoreductase nsrR. A-ring reduction by the short chain dehydrogenase nsrJ, dehydration by the scytalone dehydratase-like protein nsrI and probable spontaneous re-oxidation, results in overall deoxygenation to chrysophanol. The Baeyer-Villiger monooxygenase nsrF accepts chrysophanol as a substrate to insert one oxygen atom at two different positions to yield the precursors of both monomric units. NsrF is promiscuous/flexible in interacting with the 2 (non methylated and methylated) aromatic rings of chrysophanol, thus diverging the biosynthetic pathway at this point. After the hydrolysis of the lactones, methylesterification by the methyltransferase nsrG yields respectively moniliphenone and 2,2',6'-trihydroxy-4-methyl-6-methoxya-cyldiphenylmethanone. The next steps are the hydroxylation by the FAD-dependent monooxygenase nsrK, followed by isomerization by the monooxygenase nsrQ. The short chain dehydrogenase/reductase nsrO then catalyzes the C-5 ketoreduction to give the xanthone skeleton of blennolide C and 5-acetylblennolide A. The acetyltransferase nsrL has a strict substrate specificity and uses only blennolide A but not blennolide C to yield 5-acetylblennolide A as the single-acetylated product. In the final step of the biosynthesis, the heterodimerization of the 2 xanthones, blennolide C and 5-acetylblennolide A, is catalyzed by the cytochrome P450 monooxygenase nsrP. NsrP can utilize at least three different xanthones as its substrates to perform the dimerization reaction. This is Monooxygenase nsrS from Aspergillus novofumigatus (strain IBT 16806).